Consider the following 353-residue polypeptide: Basic membrane protein C (353 aa).

The first 16 residues, 1-16 (MFKRFIFITLSLLVFA), serve as a signal peptide directing secretion. The N-palmitoyl cysteine moiety is linked to residue cysteine 17. Cysteine 17 carries the S-diacylglycerol cysteine lipid modification.

The protein belongs to the BMP lipoprotein family. In terms of assembly, monomer.

The protein resides in the cell inner membrane. Functionally, may be part of an ABC-type nucleoside uptake system involved in the purine salvage pathway. The polypeptide is Basic membrane protein C (bmpC) (Borreliella burgdorferi (strain N40) (Borrelia burgdorferi)).